The sequence spans 256 residues: 1-(5-phosphoribosyl)-5-[(5-phosphoribosylamino)methylideneamino] imidazole-4-carboxamide isomerase (256 aa).

The active-site Proton acceptor is D8. D129 functions as the Proton donor in the catalytic mechanism.

Belongs to the HisA/HisF family.

Its subcellular location is the cytoplasm. It carries out the reaction 1-(5-phospho-beta-D-ribosyl)-5-[(5-phospho-beta-D-ribosylamino)methylideneamino]imidazole-4-carboxamide = 5-[(5-phospho-1-deoxy-D-ribulos-1-ylimino)methylamino]-1-(5-phospho-beta-D-ribosyl)imidazole-4-carboxamide. It functions in the pathway amino-acid biosynthesis; L-histidine biosynthesis; L-histidine from 5-phospho-alpha-D-ribose 1-diphosphate: step 4/9. In Synechococcus elongatus (strain ATCC 33912 / PCC 7942 / FACHB-805) (Anacystis nidulans R2), this protein is 1-(5-phosphoribosyl)-5-[(5-phosphoribosylamino)methylideneamino] imidazole-4-carboxamide isomerase.